A 398-amino-acid polypeptide reads, in one-letter code: tRNA(Ile)-lysidine synthase (398 aa).

25–30 (SGGVDS) is an ATP binding site.

It belongs to the tRNA(Ile)-lysidine synthase family.

It localises to the cytoplasm. The catalysed reaction is cytidine(34) in tRNA(Ile2) + L-lysine + ATP = lysidine(34) in tRNA(Ile2) + AMP + diphosphate + H(+). Ligates lysine onto the cytidine present at position 34 of the AUA codon-specific tRNA(Ile) that contains the anticodon CAU, in an ATP-dependent manner. Cytidine is converted to lysidine, thus changing the amino acid specificity of the tRNA from methionine to isoleucine. The protein is tRNA(Ile)-lysidine synthase of Francisella tularensis subsp. holarctica (strain OSU18).